We begin with the raw amino-acid sequence, 197 residues long: dITP/XTP pyrophosphatase (197 aa).

Substrate is bound at residue 8–13; it reads TKNKGK. Mg(2+)-binding residues include Glu42 and Asp71. Residue Asp71 is the Proton acceptor of the active site. Residues Ser72, 154 to 157, Lys177, and 182 to 183 contribute to the substrate site; these read FGYD and HR.

It belongs to the HAM1 NTPase family. In terms of assembly, homodimer. Requires Mg(2+) as cofactor.

The enzyme catalyses XTP + H2O = XMP + diphosphate + H(+). It catalyses the reaction dITP + H2O = dIMP + diphosphate + H(+). It carries out the reaction ITP + H2O = IMP + diphosphate + H(+). Pyrophosphatase that catalyzes the hydrolysis of nucleoside triphosphates to their monophosphate derivatives, with a high preference for the non-canonical purine nucleotides XTP (xanthosine triphosphate), dITP (deoxyinosine triphosphate) and ITP. Seems to function as a house-cleaning enzyme that removes non-canonical purine nucleotides from the nucleotide pool, thus preventing their incorporation into DNA/RNA and avoiding chromosomal lesions. This Oceanobacillus iheyensis (strain DSM 14371 / CIP 107618 / JCM 11309 / KCTC 3954 / HTE831) protein is dITP/XTP pyrophosphatase.